We begin with the raw amino-acid sequence, 305 residues long: Probable xyloglucan endotransglucosylase/hydrolase protein 8 (305 aa).

The N-terminal stretch at 1 to 31 (METERRIITSCSAMTALFLFMTALMASSSIA) is a signal peptide. The 200-residue stretch at 32–231 (ATPTQSFEDN…WKKAPFVSSY (200 aa)) folds into the GH16 domain. Residues N61 and N66 are each glycosylated (N-linked (GlcNAc...) asparagine). The active-site Nucleophile is E115. The active-site Proton donor is E119. E119 contacts xyloglucan. N123 carries an N-linked (GlcNAc...) asparagine glycan. 132 to 134 (QTN) provides a ligand contact to xyloglucan. The N-linked (GlcNAc...) asparagine glycan is linked to N138. Residues 142 to 144 (NRE), 210 to 211 (DW), and G215 each bind xyloglucan. 2 disulfides stabilise this stretch: C239–C248 and C286–C299. R291 contributes to the xyloglucan binding site.

This sequence belongs to the glycosyl hydrolase 16 family. XTH group 1 subfamily. In terms of processing, contains at least one intrachain disulfide bond essential for its enzymatic activity.

Its subcellular location is the secreted. It localises to the cell wall. It is found in the extracellular space. The protein localises to the apoplast. It carries out the reaction breaks a beta-(1-&gt;4) bond in the backbone of a xyloglucan and transfers the xyloglucanyl segment on to O-4 of the non-reducing terminal glucose residue of an acceptor, which can be a xyloglucan or an oligosaccharide of xyloglucan.. In terms of biological role, catalyzes xyloglucan endohydrolysis (XEH) and/or endotransglycosylation (XET). Cleaves and religates xyloglucan polymers, an essential constituent of the primary cell wall, and thereby participates in cell wall construction of growing tissues. The sequence is that of Probable xyloglucan endotransglucosylase/hydrolase protein 8 (XTH8) from Arabidopsis thaliana (Mouse-ear cress).